A 267-amino-acid polypeptide reads, in one-letter code: Pyridoxine 5'-phosphate synthase (267 aa).

Position 8 (Asn8) interacts with 3-amino-2-oxopropyl phosphate. 1-deoxy-D-xylulose 5-phosphate is bound at residue 10–11 (DH). Arg19 lines the 3-amino-2-oxopropyl phosphate pocket. His44 functions as the Proton acceptor in the catalytic mechanism. 1-deoxy-D-xylulose 5-phosphate is bound by residues Arg46 and His51. Catalysis depends on Glu71, which acts as the Proton acceptor. Residue Thr101 participates in 1-deoxy-D-xylulose 5-phosphate binding. Residue His219 is the Proton donor of the active site. 3-amino-2-oxopropyl phosphate contacts are provided by residues Gly220 and 241–242 (GH).

This sequence belongs to the PNP synthase family. As to quaternary structure, homooctamer; tetramer of dimers.

Its subcellular location is the cytoplasm. The catalysed reaction is 3-amino-2-oxopropyl phosphate + 1-deoxy-D-xylulose 5-phosphate = pyridoxine 5'-phosphate + phosphate + 2 H2O + H(+). The protein operates within cofactor biosynthesis; pyridoxine 5'-phosphate biosynthesis; pyridoxine 5'-phosphate from D-erythrose 4-phosphate: step 5/5. Its function is as follows. Catalyzes the complicated ring closure reaction between the two acyclic compounds 1-deoxy-D-xylulose-5-phosphate (DXP) and 3-amino-2-oxopropyl phosphate (1-amino-acetone-3-phosphate or AAP) to form pyridoxine 5'-phosphate (PNP) and inorganic phosphate. This is Pyridoxine 5'-phosphate synthase from Helicobacter hepaticus (strain ATCC 51449 / 3B1).